The primary structure comprises 91 residues: MAHNVFCARYKQEMEGLDEPPFDSDFGHKIYNNVSKRAWGEWIEHQKMLLNEYRLQPWTPQAQEFLVEQMNQYFFGEGAQLPKEYVPPSPR.

The protein belongs to the Fe(2+)-trafficking protein family.

Could be a mediator in iron transactions between iron acquisition and iron-requiring processes, such as synthesis and/or repair of Fe-S clusters in biosynthetic enzymes. The protein is Probable Fe(2+)-trafficking protein of Acidobacterium capsulatum (strain ATCC 51196 / DSM 11244 / BCRC 80197 / JCM 7670 / NBRC 15755 / NCIMB 13165 / 161).